The primary structure comprises 539 residues: Gamma-2-syntrophin (539 aa).

Positions 73 to 156 (TVTLRRQPVG…EVTITVEYLR (84 aa)) constitute a PDZ domain. Low complexity-rich tracts occupy residues 168 to 183 (SPGPSSDHSSGASSPL) and 194 to 205 (SSTTAPSSPSSP). The interval 168–209 (SPGPSSDHSSGASSPLFDSGLHLNGNSSTTAPSSPSSPIAKD) is disordered. The PH domain maps to 296 to 421 (QVVHMGWVNE…WEKSFQRATF (126 aa)).

Belongs to the syntrophin family. Interacts with the dystrophin protein DMD and related proteins DTNA and DTNB. Widely expressed. Strong expression in brain and testis. In CNS, it is expressed in the perikaryon and proximal portion of the neuronal processes. Strong expression in the hippocampus, neuron-rich dendate granule cells, and pyramidal cell layers. Highly expressed in neurons of the cerebral cortex. Also expressed in the cerebellar cortex, deep cerebellar nuclei, thalamus, and basal ganglia.

The protein localises to the cell membrane. Its subcellular location is the sarcolemma. It localises to the cytoplasm. It is found in the cytoskeleton. Functionally, adapter protein that binds to and probably organizes the subcellular localization of a variety of proteins. May link various receptors to the actin cytoskeleton and the dystrophin glycoprotein complex. The polypeptide is Gamma-2-syntrophin (SNTG2) (Homo sapiens (Human)).